Reading from the N-terminus, the 493-residue chain is Aluminum-activated malate transporter 1 (493 aa).

5 helical membrane passes run Val28–Thr48, Phe51–Gly71, Thr104–Val124, Lys133–Phe153, and Val169–Gly189. Ser320 and Ser327 each carry phosphoserine. Thr385 carries the phosphothreonine modification. A compositionally biased stretch (basic and acidic residues) spans Asp441–Arg452. The segment at Asp441 to Cys460 is disordered.

Belongs to the aromatic acid exporter (TC 2.A.85) family. In terms of processing, phosphorylated. A reversible phosphorylation is required for activation. Expressed in roots, but not in shoots. Detected in the root apex in absence of aluminum stress and in root apices, the stele and endodermis of the elongating zone of primary and lateral roots after aluminum stress. Not expressed in cortical and epidermal cells.

Its subcellular location is the cell membrane. Its activity is regulated as follows. Activated by external aluminum. Functionally, malate transporter critical for aluminum tolerance. The STOP1 transcription factor is required for ALMT1 expression. In Arabidopsis thaliana (Mouse-ear cress), this protein is Aluminum-activated malate transporter 1 (ALMT1).